The following is a 425-amino-acid chain: Glutamyl-tRNA(Gln) amidotransferase subunit D (425 aa).

Positions 53 to 84 (ENNGEAANGGNGGKNGQKEPEPAKEKVSKPGL) are disordered. Positions 68–80 (GQKEPEPAKEKVS) are enriched in basic and acidic residues. An Asparaginase/glutaminase domain is found at 85-414 (PKVSILSTGG…EKAVSMLGEN (330 aa)). Residues Thr-95, Thr-171, Asp-172, and Lys-248 contribute to the active site.

Belongs to the asparaginase 1 family. GatD subfamily. As to quaternary structure, heterodimer of GatD and GatE.

The enzyme catalyses L-glutamyl-tRNA(Gln) + L-glutamine + ATP + H2O = L-glutaminyl-tRNA(Gln) + L-glutamate + ADP + phosphate + H(+). Its function is as follows. Allows the formation of correctly charged Gln-tRNA(Gln) through the transamidation of misacylated Glu-tRNA(Gln) in organisms which lack glutaminyl-tRNA synthetase. The reaction takes place in the presence of glutamine and ATP through an activated gamma-phospho-Glu-tRNA(Gln). The GatDE system is specific for glutamate and does not act on aspartate. The sequence is that of Glutamyl-tRNA(Gln) amidotransferase subunit D from Methanosarcina mazei (strain ATCC BAA-159 / DSM 3647 / Goe1 / Go1 / JCM 11833 / OCM 88) (Methanosarcina frisia).